We begin with the raw amino-acid sequence, 286 residues long: ATP synthase gamma chain (286 aa).

The protein belongs to the ATPase gamma chain family. In terms of assembly, F-type ATPases have 2 components, CF(1) - the catalytic core - and CF(0) - the membrane proton channel. CF(1) has five subunits: alpha(3), beta(3), gamma(1), delta(1), epsilon(1). CF(0) has three main subunits: a, b and c.

It is found in the cell membrane. Functionally, produces ATP from ADP in the presence of a proton gradient across the membrane. The gamma chain is believed to be important in regulating ATPase activity and the flow of protons through the CF(0) complex. The polypeptide is ATP synthase gamma chain (Mycoplasma mobile (strain ATCC 43663 / 163K / NCTC 11711) (Mesomycoplasma mobile)).